A 459-amino-acid polypeptide reads, in one-letter code: Exodeoxyribonuclease 7 large subunit (459 aa).

This sequence belongs to the XseA family. In terms of assembly, heterooligomer composed of large and small subunits.

Its subcellular location is the cytoplasm. The catalysed reaction is Exonucleolytic cleavage in either 5'- to 3'- or 3'- to 5'-direction to yield nucleoside 5'-phosphates.. In terms of biological role, bidirectionally degrades single-stranded DNA into large acid-insoluble oligonucleotides, which are then degraded further into small acid-soluble oligonucleotides. The polypeptide is Exodeoxyribonuclease 7 large subunit (Pseudomonas syringae pv. tomato (strain ATCC BAA-871 / DC3000)).